The primary structure comprises 305 residues: Tetraspanin-12 (305 aa).

Over 1 to 12 (MAREDSVKCLRC) the chain is Cytoplasmic. 2 S-palmitoyl cysteine lipidation sites follow: C9 and C12. The helical transmembrane segment at 13 to 33 (LLYALNLLFWLMSISVLAVSA) threads the bilayer. At 34–59 (WMRDYLNNVLTLTAETRVEEAVILTY) the chain is on the extracellular side. A helical membrane pass occupies residues 60–80 (FPVVHPVMIAVCCFLIIVGML). The Cytoplasmic segment spans residues 81–89 (GYCGTVKRN). C83 carries the S-palmitoyl cysteine lipid modification. Residues 90 to 110 (LLLLAWYFGSLLVIFCVELAC) form a helical membrane-spanning segment. The Extracellular portion of the chain corresponds to 111–224 (GVWTYEQEIM…RGTKQLQVLR (114 aa)). A helical transmembrane segment spans residues 225 to 245 (FLGISIGVTQILAMILTITLL). Residues 246-305 (WALYYDRREPGTDQMMALKNDTTQHLPCHSVELLKPSLSRIFEHTSMANSFNTHFEMEEL) lie on the Cytoplasmic side of the membrane.

It belongs to the tetraspanin (TM4SF) family. Component of a complex, at least composed of TSPAN12, FZD4 and norrin (NDP). Interacts (when palmitoylated) with ADAM10. Interacts with MMP14/MT1-MMP. Post-translationally, palmitoylated; required for interaction with ADAM10. The precise position of palmitoylated residues is unclear and occurs either on Cys-9, Cys-12 and/or Cys-83.

Its subcellular location is the cell membrane. Functionally, regulator of cell surface receptor signal transduction. Plays a central role in retinal vascularization by regulating norrin (NDP) signal transduction. Acts in concert with norrin (NDP) to promote FZD4 multimerization and subsequent activation of FZD4, leading to promote accumulation of beta-catenin (CTNNB1) and stimulate LEF/TCF-mediated transcriptional programs. Suprisingly, it only activates the norrin (NDP)-dependent activation of FZD4, while it does not activate the Wnt-dependent activation of FZD4, suggesting the existence of a Wnt-independent signaling that also promote accumulation the beta-catenin (CTNNB1). Acts as a regulator of membrane proteinases such as ADAM10 and MMP14/MT1-MMP. Activates ADAM10-dependent cleavage activity of amyloid precursor protein (APP). Activates MMP14/MT1-MMP-dependent cleavage activity. In Bos taurus (Bovine), this protein is Tetraspanin-12 (TSPAN12).